We begin with the raw amino-acid sequence, 228 residues long: Cytochrome P450 monooxygenase ataY (228 aa).

Residue cysteine 216 coordinates heme.

Belongs to the cytochrome P450 family. Heme is required as a cofactor.

Its pathway is mycotoxin biosynthesis. In terms of biological role, cytochrome P450 monooxygenase; part of the gene cluster that mediates the biosynthesis of acetylaranotin, a member of the epipolythiodioxopiperazine (ETP) class of toxins characterized by a disulfide-bridged cyclic dipeptide. The first step of acetylaranotin biosynthesis is performed by the NRPS ataP which produces diketopiperazine cyclo-L-Phe-L-Phe via the condensation of 2 phenylalanines (L-Phe). The ataC domain of ataTC then catalyzes the formation of bishydroxylation of cyclo-L-Phe-L-Phe. The glutathione S-transferase domain ataG in ataIMG further catalyzes the conjugation of two glutathiones to the bishydroxylated intermediate. Next, the dipeptidase ataJ removes the Glu residues. The following step is performed by the carbon sulfur lyase domain ataI of ataIMG which may convert the bis-cysteinyl adduct to yield an epidithiol intermediate. The ataT domain from ataTC then catalyzes the oxidation of the free dithiols, followed by a cyclization step catalyzed by the cytochrome P450 ataF. AtaF probably acts as an epoxidase to promote a dual epoxidation formation at C8 and C9 along with C8' and C9', followed by the spontaneous nucleophilic attack of the amide nitrogens N10 and N10' to yield an intermediate with the pyrrolidine partial structure. The final steps of acetylaranotin biosynthesis involve the acetylation and ring rearrangement of an epitetrathiodiketopiperazine intermediate to produce acetylaranotin. AtaH probably catalyzes the acetylation of epitetrathiodiketopiperazine to produce a diacetate and ataY is responsible for the formation of the dihydrooxepin moiety that converts the diacetate intermediate to acetylaranotin via acetylapoaranotin. Both enzymes could function independently in the absence of the other. The acetylaranotin bis-thiomethyltransferase ataS located outside of acetylaranotin gene cluster is the main thiomethyltransferase responsible for converting acetylaranotin and its related intermediates to their methylated forms. In Aspergillus terreus (strain NIH 2624 / FGSC A1156), this protein is Cytochrome P450 monooxygenase ataY.